A 589-amino-acid chain; its full sequence is Probable translation initiation factor IF-2 (589 aa).

The 216-residue stretch at 14-229 (LRQPIVCVLG…LAGLAQRFLE (216 aa)) folds into the tr-type G domain. The segment at 23–30 (GHVDHGKT) is G1. Residue 23-30 (GHVDHGKT) coordinates GTP. Residues 48 to 52 (GITQR) form a G2 region. Positions 84 to 87 (DTPG) are G3. Residues 84–88 (DTPGH) and 138–141 (NKID) contribute to the GTP site. The segment at 138-141 (NKID) is G4. Residues 206-208 (SAK) form a G5 region.

Belongs to the TRAFAC class translation factor GTPase superfamily. Classic translation factor GTPase family. IF-2 subfamily.

Function in general translation initiation by promoting the binding of the formylmethionine-tRNA to ribosomes. Seems to function along with eIF-2. The chain is Probable translation initiation factor IF-2 (infB) from Thermoplasma acidophilum (strain ATCC 25905 / DSM 1728 / JCM 9062 / NBRC 15155 / AMRC-C165).